Reading from the N-terminus, the 206-residue chain is Large ribosomal subunit protein uL4 (206 aa).

It belongs to the universal ribosomal protein uL4 family. In terms of assembly, part of the 50S ribosomal subunit.

In terms of biological role, one of the primary rRNA binding proteins, this protein initially binds near the 5'-end of the 23S rRNA. It is important during the early stages of 50S assembly. It makes multiple contacts with different domains of the 23S rRNA in the assembled 50S subunit and ribosome. Its function is as follows. Forms part of the polypeptide exit tunnel. The polypeptide is Large ribosomal subunit protein uL4 (Nitrobacter hamburgensis (strain DSM 10229 / NCIMB 13809 / X14)).